Consider the following 509-residue polypeptide: Cardiolipin synthase 1 (509 aa).

3 helical membrane passes run 4–24 (PIVQ…LLNT), 30–50 (YTFV…VIFI), and 59–79 (LAWF…YAIF). PLD phosphodiesterase domains lie at 238–265 (VNYR…GDEY) and 422–449 (KDGF…DVRS). Catalysis depends on residues His-243, Lys-245, Asp-250, His-427, Lys-429, and Asp-434.

This sequence belongs to the phospholipase D family. Cardiolipin synthase subfamily.

It is found in the cell membrane. The enzyme catalyses 2 a 1,2-diacyl-sn-glycero-3-phospho-(1'-sn-glycerol) = a cardiolipin + glycerol. Catalyzes the reversible phosphatidyl group transfer from one phosphatidylglycerol molecule to another to form cardiolipin (CL) (diphosphatidylglycerol) and glycerol. The polypeptide is Cardiolipin synthase 1 (cls1) (Bacillus cereus (strain ATCC 14579 / DSM 31 / CCUG 7414 / JCM 2152 / NBRC 15305 / NCIMB 9373 / NCTC 2599 / NRRL B-3711)).